The sequence spans 183 residues: MRRHRQSGFTLLEVLLVAMLMGLVATAVTLSMGGARGDRELDKQARRFMATLQQAQEYSVMDGRLVGLRIEDHGWQFMQRAAKDRKWQALTGDKILGQVQLPDTMLLAIELEGFSWRTESDEKTERGRDEKERTPQVLIFPGGELSPFVLTLTQQDEDVRYLRTVKADEFGRLRLLQDEEEEE.

Positions 1-8 (MRRHRQSG) are cleaved as a propeptide — leader sequence. Residue phenylalanine 9 is modified to N-methylphenylalanine. The helical transmembrane segment at 9-28 (FTLLEVLLVAMLMGLVATAV) threads the bilayer.

Belongs to the GSP H family. As to quaternary structure, type II secretion is composed of four main components: the outer membrane complex, the inner membrane complex, the cytoplasmic secretion ATPase and the periplasm-spanning pseudopilus. Interacts with core component ExeG. In terms of processing, cleaved by prepilin peptidase. Methylated by prepilin peptidase at the amino group of the N-terminal phenylalanine once the leader sequence is cleaved by prepilin peptidase.

Its subcellular location is the cell inner membrane. Its function is as follows. Component of the type II secretion system required for the energy-dependent secretion of extracellular factors such as proteases and toxins from the periplasm. Part of the pseudopilus tip complex that is critical for the recognition and binding of secretion substrates. This Aeromonas hydrophila protein is Type II secretion system protein H (exeH).